Consider the following 662-residue polypeptide: DNA topoisomerase 4 subunit B (662 aa).

ATP-binding positions include Tyr20, Asn60, Asp87, 129–135, and Lys359; that span reads GLHGVGI. A Toprim domain is found at 439-553; sequence TELFIVEGDS…EGHLYLAKPP (115 aa). Mg(2+) contacts are provided by Glu445, Asp518, and Asp520.

Belongs to the type II topoisomerase family. ParE type 1 subfamily. As to quaternary structure, heterotetramer composed of ParC and ParE. Mg(2+) serves as cofactor. It depends on Mn(2+) as a cofactor. Requires Ca(2+) as cofactor.

The catalysed reaction is ATP-dependent breakage, passage and rejoining of double-stranded DNA.. Topoisomerase IV is essential for chromosome segregation. It relaxes supercoiled DNA. Performs the decatenation events required during the replication of a circular DNA molecule. In Rickettsia conorii (strain ATCC VR-613 / Malish 7), this protein is DNA topoisomerase 4 subunit B.